We begin with the raw amino-acid sequence, 92 residues long: DNA-directed RNA polymerase subunit Rpo11 (92 aa).

It belongs to the archaeal Rpo11/eukaryotic RPB11/RPC19 RNA polymerase subunit family. As to quaternary structure, part of the 13-subunit RNA polymerase complex.

It is found in the cytoplasm. The catalysed reaction is RNA(n) + a ribonucleoside 5'-triphosphate = RNA(n+1) + diphosphate. In terms of biological role, DNA-dependent RNA polymerase (RNAP) catalyzes the transcription of DNA into RNA using the four ribonucleoside triphosphates as substrates. The protein is DNA-directed RNA polymerase subunit Rpo11 of Saccharolobus solfataricus (strain ATCC 35092 / DSM 1617 / JCM 11322 / P2) (Sulfolobus solfataricus).